The chain runs to 447 residues: Trimethylamine monooxygenase (447 aa).

Positions 13, 38, 40, 46, 47, and 63 each coordinate FAD. NADP(+) is bound by residues Trp71 and Asn73. Residues Asn73 and Val126 each coordinate FAD. NADP(+) is bound by residues Tyr173, Ala205, Ser206, Ser208, and Arg229. FAD is bound by residues Gln318 and Thr321. Arg413 contributes to the NADP(+) binding site.

This sequence belongs to the FMO family. It depends on FAD as a cofactor.

The enzyme catalyses trimethylamine + NADPH + O2 = trimethylamine N-oxide + NADP(+) + H2O. Functionally, catalyzes the oxidation of trimethylamine (TMA) to produce trimethylamine N-oxide (TMAO). TMA is the best substrate, but the enzyme can also oxidize methimazole, indole and dimethylamine (DMA). In Roseovarius nubinhibens (strain ATCC BAA-591 / DSM 15170 / ISM), this protein is Trimethylamine monooxygenase.